Here is a 382-residue protein sequence, read N- to C-terminus: GDP-mannose transporter (382 aa).

Residues 1-40 (MADDKKTNEYTIEMDKLDHGNKDFEAPAPAVRPRGPPVAQ) lie on the Cytoplasmic side of the membrane. The chain crosses the membrane as a helical span at residues 41–61 (LANNPILPVLAYCGSSILMTV). The Lumenal segment spans residues 62-71 (MNKYVLSGRD). A helical transmembrane segment spans residues 72-92 (FNLNFFLLCVQSIVCIVAIQT). Residues 93 to 110 (CKVSKLITYRDFNSDEAK) lie on the Cytoplasmic side of the membrane. Residues 111–127 (KWFPITLLLIGMIYTGS) form a helical membrane-spanning segment. At 128–134 (KALQYLS) the chain is on the lumenal side. Residues 135-151 (IPVYTIFKNLTIILIAY) form a helical membrane-spanning segment. Residues 152–160 (GEVLWFGGS) lie on the Cytoplasmic side of the membrane. Residues 161 to 182 (VTGLTLFSFGLMVLSSIIAAWA) traverse the membrane as a helical segment. Topologically, residues 183–200 (DIKHAVESSGDATAKVST) are lumenal. A helical transmembrane segment spans residues 201-221 (LNAGYIWMLINCLCTSSYVLG). The Cytoplasmic segment spans residues 222–233 (MRKRIKLTNFKD). Residues 234-254 (FDTMFYNNLLSIPVLLVLTFL) traverse the membrane as a helical segment. The Lumenal segment spans residues 255-274 (MEDWSSANIARNFPSTDRNG). The helical transmembrane segment at 275-295 (ILFAMILSGLSSVFISYTSAW) threads the bilayer. The Cytoplasmic segment spans residues 296-303 (CVRVTSST). Residues 304-324 (TYSMVGALNKLPIALSGLIFF) form a helical membrane-spanning segment. The Lumenal portion of the chain corresponds to 325-327 (DAP). A helical membrane pass occupies residues 328–348 (VTFPSVSAIVVGFISGIVYAV). Residues 349–382 (AKIKQSAKPKTGVLPMSNPPVSASSQSMRDSLRS) are Cytoplasmic-facing. Residues 358 to 382 (KTGVLPMSNPPVSASSQSMRDSLRS) are disordered. A compositionally biased stretch (polar residues) spans 367–382 (PPVSASSQSMRDSLRS).

It belongs to the TPT transporter family. SLC35D subfamily. As to quaternary structure, homooligomer.

The protein resides in the golgi apparatus membrane. The protein localises to the cytoplasmic vesicle membrane. It is found in the endoplasmic reticulum membrane. Its function is as follows. Involved in the import of GDP-mannose from the cytoplasm into the Golgi lumen. The sequence is that of GDP-mannose transporter (gmt1) from Aspergillus fumigatus (strain CBS 144.89 / FGSC A1163 / CEA10) (Neosartorya fumigata).